Here is a 118-residue protein sequence, read N- to C-terminus: MSTLNQAHCEACSAGAPQVSEAELPELLRQIPDWNIEVRDSVMQLEKVFLFKNFKFALAFTNAVGEIAEAEGHHPGLLTEWGKVTVTWWSHSIKGLHRNDFIMAARTDEVAAKAEGRK.

The protein belongs to the pterin-4-alpha-carbinolamine dehydratase family.

It catalyses the reaction (4aS,6R)-4a-hydroxy-L-erythro-5,6,7,8-tetrahydrobiopterin = (6R)-L-erythro-6,7-dihydrobiopterin + H2O. Its function is as follows. Involved in tetrahydrobiopterin biosynthesis. Seems to both prevent the formation of 7-pterins and accelerate the formation of quinonoid-BH2. May also have a positive regulatory role in the expression of phhA. The sequence is that of Pterin-4-alpha-carbinolamine dehydratase (phhB) from Pseudomonas syringae pv. tomato (strain ATCC BAA-871 / DC3000).